The sequence spans 381 residues: 2-epi-5-epi-valiolone synthase (381 aa).

NAD(+) contacts are provided by residues aspartate 50, 81 to 84 (EEAK), 114 to 118 (GIVLD), 138 to 139 (TS), lysine 151, lysine 160, and 178 to 181 (FLDT). Residue lysine 151 is part of the active site. Residues glutamate 193, histidine 264, and histidine 280 each contribute to the a divalent metal cation site.

It belongs to the sugar phosphate cyclases superfamily. EEVS family. The cofactor is NAD(+). Co(2+) serves as cofactor.

It carries out the reaction D-sedoheptulose 7-phosphate = 2-epi-5-epi-valiolone + phosphate. It participates in antibiotic biosynthesis. Its function is as follows. Catalyzes the cyclization of D-sedoheptulose 7-phosphate to 2-epi-5-epi-valiolone. Involved in cetoniacytone A biosynthesis. The chain is 2-epi-5-epi-valiolone synthase from Actinomyces sp.